The following is a 133-amino-acid chain: Ribosomal silencing factor RsfS (133 aa).

It belongs to the Iojap/RsfS family. In terms of assembly, interacts with ribosomal protein uL14 (rplN).

The protein resides in the cytoplasm. In terms of biological role, functions as a ribosomal silencing factor. Interacts with ribosomal protein uL14 (rplN), blocking formation of intersubunit bridge B8. Prevents association of the 30S and 50S ribosomal subunits and the formation of functional ribosomes, thus repressing translation. The chain is Ribosomal silencing factor RsfS from Zymomonas mobilis subsp. mobilis (strain ATCC 31821 / ZM4 / CP4).